The primary structure comprises 377 residues: MSNGIVIIGSGFAARQLVKNIRKQDASIPLTLIAADSMDEYNKPDLSHVISQGQRADDLTRQTAGEFAEQFNLHLFPQTWVTDIDAEARVVKSQNNQWQYDKLVLATGASAFVPPVPGRELMLTLNSQQEYRACETQLRDARRVLIVGGGLIGSELAMDFCRAGKAVTLIDNAASILASLMPPEVSSRLQHRLTEMGVHLLLKSQLQGLEKTDSGILATLDRQRSIEVDAVIAATGLRPETALARRAGLTINRGVCVDSYLQTSNTDIYALGDCAEINGQVLPFLQPIQLSAMVLAKNLLGNNTPLKLPAMLVKIKTPELPLHLAGETQRQDLRWQINTERQGMVARGVDDADQLRAFVVSEDRMKEAFGLLKTLPM.

It belongs to the FAD-dependent oxidoreductase family. FAD serves as cofactor.

It is found in the cytoplasm. The enzyme catalyses 2 reduced [nitric oxide reductase rubredoxin domain] + NAD(+) + H(+) = 2 oxidized [nitric oxide reductase rubredoxin domain] + NADH. Its pathway is nitrogen metabolism; nitric oxide reduction. Functionally, one of at least two accessory proteins for anaerobic nitric oxide (NO) reductase. Reduces the rubredoxin moiety of NO reductase. The polypeptide is Nitric oxide reductase FlRd-NAD(+) reductase (Escherichia coli O9:H4 (strain HS)).